Consider the following 892-residue polypeptide: Translation initiation factor IF-2 (892 aa).

Disordered stretches follow at residues 32 to 102 and 114 to 300; these read LAQA…PGDA and KAPE…KQAE. Positions 35-48 are enriched in polar residues; it reads AGSSDTKNSPASKA. A compositionally biased stretch (basic and acidic residues) spans 139 to 166; sequence QEEKKESSEETSPERVEETLIIRTRTEP. Over residues 200–211 the composition is skewed to low complexity; sequence AASTEETTQQQP. Residues 212 to 224 show a composition bias toward polar residues; it reads RQNDAASYNNKQQ. Positions 225–238 are enriched in low complexity; that stretch reads PSGTSSRPASSAPS. Basic and acidic residues predominate over residues 252–276; it reads RGSERDRSKRSDESVKAFTGRDRYG. In terms of domain architecture, tr-type G spans 397-566; sequence IRSPIVAFMG…ALQAEVLELK (170 aa). Residues 406 to 413 form a G1 region; that stretch reads GHVDHGKT. 406–413 is a GTP binding site; that stretch reads GHVDHGKT. The tract at residues 431-435 is G2; the sequence is AITQH. Residues 452-455 are G3; that stretch reads DTPG. GTP-binding positions include 452–456 and 506–509; these read DTPGH and NKCD. Residues 506–509 form a G4 region; it reads NKCD. A G5 region spans residues 542 to 544; that stretch reads SAK.

Belongs to the TRAFAC class translation factor GTPase superfamily. Classic translation factor GTPase family. IF-2 subfamily.

The protein localises to the cytoplasm. Its function is as follows. One of the essential components for the initiation of protein synthesis. Protects formylmethionyl-tRNA from spontaneous hydrolysis and promotes its binding to the 30S ribosomal subunits. Also involved in the hydrolysis of GTP during the formation of the 70S ribosomal complex. The sequence is that of Translation initiation factor IF-2 from Chlamydia trachomatis serovar A (strain ATCC VR-571B / DSM 19440 / HAR-13).